A 686-amino-acid polypeptide reads, in one-letter code: Probable serine/threonine-protein kinase pdkA (686 aa).

The segment at 1-31 (MENIVITNTSGGGGGGVPSSSTDPPNNTTTT) is disordered. Over residues 18–31 (PSSSTDPPNNTTTT) the composition is skewed to low complexity. One can recognise a Protein kinase domain in the interval 69 to 449 (FIIGKVLGEG…FDNLKAHPFF (381 aa)). Residues 79-81 (SYG) and K98 contribute to the ATP site. Residues 100–144 (LEKKQIIKENKIKYVQIEKEIFCKSNHPNIVKLFFTFRSEQCLYY) form a PIF-pocket region. ATP contacts are provided by residues 147-149 (ELC) and D153. The active-site Proton acceptor is the D192. Residues E196 and D210 each contribute to the ATP site. Disordered regions lie at residues 211 to 321 (FGTG…NTNT) and 481 to 584 (LFSP…NNIS). Residues 222-257 (SSQQQQQQQQQQQQLPTNSSGNLSSLLNNVNNLSVS) are compositionally biased toward low complexity. Residues 258-267 (TDLTQQQQNR) show a composition bias toward polar residues. Low complexity-rich tracts occupy residues 268 to 279 (TSSVDSASTTDS), 288 to 321 (TTTT…NTNT), and 503 to 568 (NSCN…QRSG). The region spanning 593 to 682 (VIYQGLVWKR…DSIKSVILSS (90 aa)) is the PH domain.

This sequence belongs to the protein kinase superfamily. AGC Ser/Thr protein kinase family. PDPK1 subfamily.

The enzyme catalyses L-seryl-[protein] + ATP = O-phospho-L-seryl-[protein] + ADP + H(+). The catalysed reaction is L-threonyl-[protein] + ATP = O-phospho-L-threonyl-[protein] + ADP + H(+). This chain is Probable serine/threonine-protein kinase pdkA (pdkA), found in Dictyostelium discoideum (Social amoeba).